Here is a 204-residue protein sequence, read N- to C-terminus: Ras-related protein Rab-7L1 (204 aa).

Positions 33, 34, 35, 36, 37, and 39 each coordinate GTP. An Effector region motif is present at residues 36–44 (YKSTVGVDF). Position 71 is a phosphothreonine; by LRRK2 (T71). A Phosphoserine modification is found at S72. GTP-binding residues include K126, V156, and K157. Residues C203 and C204 are each lipidated (S-geranylgeranyl cysteine).

Belongs to the small GTPase superfamily. Rab family. As to quaternary structure, interacts with LRRK2 (via the N-terminus); this interaction is direct and stimulates kinase activity.

It localises to the cell membrane. The protein resides in the cytoplasm. Its subcellular location is the perinuclear region. It is found in the golgi apparatus. The protein localises to the golgi apparatus membrane. It localises to the trans-Golgi network. The protein resides in the cytoskeleton. Functionally, the small GTPases Rab are key regulators in vesicle trafficking. Essential for maintaining the integrity of endosome-trans-Golgi network structure. Together with LRRK2, plays a role in the retrograde trafficking pathway for recycling proteins, such as mannose 6 phosphate receptor (M6PR), between lysosomes and the Golgi apparatus in a retromer-dependent manner. Recruits LRRK2 to the Golgi apparatus and stimulates LRRK2 kinase activity. Stimulates phosphorylation of RAB10 'Thr-73' by LRRK2. Also regulates neuronal process morphology in the intact central nervous system (CNS). The polypeptide is Ras-related protein Rab-7L1 (Rab29) (Mus musculus (Mouse)).